A 453-amino-acid chain; its full sequence is Armadillo repeat-containing X-linked protein 1 (453 aa).

Residues 1 to 6 (MGRTRE) are Mitochondrial intermembrane-facing. Mitochondrion outer membrane (MOM)-targeting sequence stretches follow at residues 1–6 (MGRTRE) and 26–36 (RLAWGRDENEK). The chain crosses the membrane as a helical; Signal-anchor span at residues 7–29 (AGCVAAGVVIGAGACYCVYRLAW). Residues 30-453 (GRDENEKIWD…VKVLKVLTKL (424 aa)) are Cytoplasmic-facing. 2 disordered regions span residues 58 to 77 (AKTN…SEVK) and 132 to 182 (ISGN…RAPA). Over residues 167-177 (GKSKGKARSKS) the composition is skewed to basic residues. 4 ARM repeats span residues 195–235 (PYKI…NNAA), 237–276 (SFNQ…NLSV), 358–398 (PAMT…NIND), and 415–453 (SSLF…LTKL).

Belongs to the eutherian X-chromosome-specific Armcx family. In terms of assembly, interacts with MIRO1. As to expression, expressed at high levels ovary, heart, testis, prostate, brain, spleen and colon. Expressed at very low levels in liver and thymus. Not expressed in peripheral blood leukocytes. Not or reduced expressed in lung, prostate, colon, pancreas and ovarian carcinomas.

The protein localises to the mitochondrion. It is found in the mitochondrion outer membrane. Its function is as follows. Regulates mitochondrial transport during axon regeneration. Increases the proportion of motile mitochondria by recruiting stationary mitochondria into the motile pool. Enhances mitochondria movement and neurite growth in both adult axons and embryonic neurons. Promotes neuronal survival and axon regeneration after nerve injury. May link mitochondria to the Trak1-kinesin motor complex via its interaction with MIRO1. The polypeptide is Armadillo repeat-containing X-linked protein 1 (ARMCX1) (Homo sapiens (Human)).